We begin with the raw amino-acid sequence, 485 residues long: MSKRSLDPSDDFKGQKRLAIDPESTALEQDRQMLQQLSEQNSELEPQNVAPNAEIPLGFDLSGIQFNMTPDFYLRMNQGMDYAFNQPNPIATPQQLLRTSLIPTLGNLSNIILSILGKPVQEASAIVTNPASEMGMAFTKVMNMFRMVKDIYTEESFIYSSAIGMRTPSQRSTTRRANLAIFLAAVYGALQIGFFHLNENFLEVFAPDESNILTNQGTLYMELKTQAYISAMAQAERPKGDILNDLFPSDMAHRFLIRRNAKLDDKLTYVEKQIIEKCTARKERLANFSPQEALNEVYPWGKFLSEIACYIHNNYSSISAIPIPANSFKRRSKKNGLRFKAGEAESSPSESGSDLTDSLAFGIPSSTFDGSSETQNVSSVVLYDQVRHMTNNNLNNKRTRRVANRRSWTKEEEEALLDGLDLVKGPRWSQILELYGPGGKKSEVLKYRNQVQLKDKARNMKLFFLKSGQVVPAALQCVTGDLRRD.

Positions 1 to 20 are enriched in basic and acidic residues; that stretch reads MSKRSLDPSDDFKGQKRLAI. The disordered stretch occupies residues 1-23; that stretch reads MSKRSLDPSDDFKGQKRLAIDPE. The region spanning 400 to 457 is the HTH myb-type domain; that stretch reads RRVANRRSWTKEEEEALLDGLDLVKGPRWSQILELYGPGGKKSEVLKYRNQVQLKDKA. The H-T-H motif DNA-binding region spans 428–453; the sequence is WSQILELYGPGGKKSEVLKYRNQVQL.

As to quaternary structure, homodimer.

Its subcellular location is the nucleus. Binds the telomeric double-stranded TTACAGG repeat and regulates telomere length. This chain is Telomeric DNA-binding factor trf1 (trf1), found in Schizosaccharomyces pombe (strain 972 / ATCC 24843) (Fission yeast).